The primary structure comprises 95 residues: Alpha-conotoxin-like Cp20.4 (95 aa).

A signal peptide spans 1-24 (MPKLEMMLVVLLIFPLFYFDAAGG). Residues 25 to 45 (QAVQGDRRGDGLARYLQRGDR) constitute a propeptide that is removed on maturation. Position 50 is a 4-carboxyglutamate (E50). A 4-hydroxyproline modification is found at P56. 4 cysteine pairs are disulfide-bonded: C64–C73, C69–C81, C74–C91, and C79–C93.

Belongs to the conotoxin D superfamily. As to quaternary structure, hetero-, homo- or pseudo-homodimer (identical sequence, different post-translational modifications). Expressed by the venom duct.

It localises to the secreted. Its function is as follows. Alpha-conotoxins act on postsynaptic membranes, they bind to the nicotinic acetylcholine receptors (nAChR) and thus inhibit them. Through its two C-terminal domains, this homodimeric protein would bind to two nAChR allosteric sites, located outside the nAChR C-loop of the principal binding face and at the adjacent binding interface in a clockwise direction. This toxin specifically blocks mammalian neuronal nAChR of the alpha-7/CHRNA7, alpha-3-beta-2/CHRNA3-CHRNB2 and alpha-4-beta-2/CHRNA4-CHRNB2 subtypes. The polypeptide is Alpha-conotoxin-like Cp20.4 (Conus capitaneus (Captain cone)).